The chain runs to 134 residues: NADH-quinone oxidoreductase subunit A (134 aa).

Transmembrane regions (helical) follow at residues 12–32 (FAIYVIAAICLCLVMIGLAAL), 64–84 (FYLVAMFFVIFDVEALYLFAW), and 93–113 (WVGFIEAAIFIGLLLVGLLYL).

The protein belongs to the complex I subunit 3 family. As to quaternary structure, NDH-1 is composed of 14 different subunits. Subunits NuoA, H, J, K, L, M, N constitute the membrane sector of the complex.

It localises to the cell inner membrane. The enzyme catalyses a quinone + NADH + 5 H(+)(in) = a quinol + NAD(+) + 4 H(+)(out). In terms of biological role, NDH-1 shuttles electrons from NADH, via FMN and iron-sulfur (Fe-S) centers, to quinones in the respiratory chain. The immediate electron acceptor for the enzyme in this species is believed to be ubiquinone. Couples the redox reaction to proton translocation (for every two electrons transferred, four hydrogen ions are translocated across the cytoplasmic membrane), and thus conserves the redox energy in a proton gradient. The protein is NADH-quinone oxidoreductase subunit A of Aeromonas salmonicida (strain A449).